The chain runs to 957 residues: Glycine dehydrogenase (decarboxylating) (957 aa).

K708 bears the N6-(pyridoxal phosphate)lysine mark.

Belongs to the GcvP family. In terms of assembly, the glycine cleavage system is composed of four proteins: P, T, L and H. Pyridoxal 5'-phosphate is required as a cofactor.

It catalyses the reaction N(6)-[(R)-lipoyl]-L-lysyl-[glycine-cleavage complex H protein] + glycine + H(+) = N(6)-[(R)-S(8)-aminomethyldihydrolipoyl]-L-lysyl-[glycine-cleavage complex H protein] + CO2. Functionally, the glycine cleavage system catalyzes the degradation of glycine. The P protein binds the alpha-amino group of glycine through its pyridoxal phosphate cofactor; CO(2) is released and the remaining methylamine moiety is then transferred to the lipoamide cofactor of the H protein. In Escherichia coli O1:K1 / APEC, this protein is Glycine dehydrogenase (decarboxylating).